We begin with the raw amino-acid sequence, 887 residues long: 3-hydroxy-3-methylglutaryl-coenzyme A reductase (887 aa).

Over 1–9 (MLSRLFRMH) the chain is Cytoplasmic. A helical membrane pass occupies residues 10-39 (GLFVASHPWEVIVGTVTLTICMMSMNMFTG). At 40–56 (NNKICGWNYECPKFEED) the chain is on the lumenal side. A helical membrane pass occupies residues 57-78 (VLSSDIIILTITRCIAILYIYF). The region spanning 61 to 218 (DIIILTITRC…MTFFPACVSL (158 aa)) is the SSD domain. The INSIG-binding motif signature appears at 75–78 (YIYF). Topologically, residues 79 to 89 (QFQNLRQLGSK) are cytoplasmic. Lysine 89 participates in a covalent cross-link: Glycyl lysine isopeptide (Lys-Gly) (interchain with G-Cter in ubiquitin). The helical transmembrane segment at 90 to 114 (YILGIAGLFTIFSSFVFSTVVIHFL) threads the bilayer. Residues 115-123 (DKELTGLNE) are Lumenal-facing. A helical membrane pass occupies residues 124–149 (ALPFFLLLIDLSRASALAKFALSSNS). Topologically, residues 150-159 (QDEVRENIAR) are cytoplasmic. A helical membrane pass occupies residues 160-187 (GMAILGPTFTLDALVECLVIGVGTMSGV). Residues 188 to 191 (RQLE) are Lumenal-facing. Residues 192 to 220 (IMCCFGCMSVLANYFVFMTFFPACVSLVL) form a helical membrane-spanning segment. Residues 221–248 (ELSRESREGRPIWQLSHFARVLEEEENK) lie on the Cytoplasmic side of the membrane. Residue lysine 248 forms a Glycyl lysine isopeptide (Lys-Gly) (interchain with G-Cter in ubiquitin) linkage. The helical transmembrane segment at 249-275 (PNPVTQRVKMIMSLGLVLVHAHSRWIA) threads the bilayer. The Lumenal segment spans residues 276-314 (DPSPQNSTAEQSKVSLGLAEDVSKRIEPSVSLWQFYLSK). Asparagine 281 is a glycosylation site (N-linked (GlcNAc...) asparagine). A helical membrane pass occupies residues 315–339 (MISMDIEQVITLSLALLLAVKYIFF). Over 340-887 (EQAETESTLS…LQGTCTKKAA (548 aa)) the chain is Cytoplasmic. Active-site charge relay system residues include glutamate 558, lysine 690, and aspartate 766. Catalysis depends on histidine 865, which acts as the Proton donor. A Phosphoserine; by AMPK modification is found at serine 871.

The protein belongs to the HMG-CoA reductase family. In terms of assembly, homotetramer. Homodimer. Interacts (via its SSD) with INSIG1; the interaction, accelerated by sterols, leads to the recruitment of HMGCR to AMFR/gp78 for its ubiquitination by the sterol-mediated ERAD pathway. Interacts with UBIAD1. Undergoes sterol-mediated ubiquitination and ER-associated degradation (ERAD). Accumulation of sterols in the endoplasmic reticulum (ER) membrane, triggers binding of the reductase to the ER membrane protein INSIG1 or INSIG2. The INSIG1 binding leads to the recruitment of the ubiquitin ligase, AMFR/gp78, RNF139 or RNF145, initiating ubiquitination of the reductase. The ubiquitinated reductase is then extracted from the ER membrane and delivered to cytosolic 26S proteosomes by a mechanism probably mediated by the ATPase Valosin-containing protein VCP/p97. The INSIG2-binding leads to the recruitment of the ubiquitin ligase RNF139, initiating ubiquitination of the reductase. Lys-248 is the main site of ubiquitination. Ubiquitination is enhanced by the presence of a geranylgeranylated protein. Post-translationally, N-glycosylated. Deglycosylated by NGLY1 on release from the endoplasmic reticulum (ER) in a sterol-mediated manner. In terms of processing, phosphorylated. Phosphorylation at Ser-871 reduces the catalytic activity.

The protein resides in the endoplasmic reticulum membrane. It localises to the peroxisome membrane. It catalyses the reaction (R)-mevalonate + 2 NADP(+) + CoA = (3S)-3-hydroxy-3-methylglutaryl-CoA + 2 NADPH + 2 H(+). It functions in the pathway metabolic intermediate biosynthesis; (R)-mevalonate biosynthesis; (R)-mevalonate from acetyl-CoA: step 3/3. Regulated by a negative feedback mechanism through sterols and non-sterol metabolites derived from mevalonate. Phosphorylation at Ser-871 down-regulates the catalytic activity. Functionally, catalyzes the conversion of (3S)-hydroxy-3-methylglutaryl-CoA (HMG-CoA) to mevalonic acid, the rate-limiting step in the synthesis of cholesterol and other isoprenoids, thus plays a critical role in cellular cholesterol homeostasis. This chain is 3-hydroxy-3-methylglutaryl-coenzyme A reductase (Hmgcr), found in Rattus norvegicus (Rat).